The sequence spans 382 residues: Caspase-1-B (382 aa).

The propeptide occupies 1-98; it reads MTAQLNKVRK…HEHAPSPIQE (98 aa). Catalysis depends on residues histidine 216 and cysteine 270. Positions 283-292 are excised as a propeptide; that stretch reads DVAPAPLEDD.

Belongs to the peptidase C14A family. In terms of assembly, heterotetramer that consists of two anti-parallel arranged heterodimers, each one formed by a 20 kDa (Caspase-1 subunit p20) and a 10 kDa (Caspase-1 subunit p10) subunit. Heterotetramer that consists of two anti-parallel arranged heterodimers, each one formed by a 20 kDa (Caspase-1 subunit p20) and a 10 kDa (Caspase-1 subunit p10) subunit. Can form a heterodimer with isoform epsilon which then has an inhibitory effect. In terms of processing, the two subunits are derived from the precursor sequence by an autocatalytic mechanism.

It is found in the cytoplasm. The protein localises to the cell membrane. The catalysed reaction is Strict requirement for an Asp residue at position P1 and has a preferred cleavage sequence of Tyr-Val-Ala-Asp-|-.. Its function is as follows. Thiol protease involved in a variety of inflammatory processes by proteolytically cleaving other proteins, such as the precursors of the inflammatory cytokines interleukin-1 beta (IL1B) and interleukin 18 (IL18) as well as the pyroptosis inducer Gasdermin-D (GSDMD), into active mature peptides. Plays a key role in cell immunity as an inflammatory response initiator: once activated through formation of an inflammasome complex, it initiates a pro-inflammatory response through the cleavage of the two inflammatory cytokines IL1B and IL18, releasing the mature cytokines which are involved in a variety of inflammatory processes. Cleaves a tetrapeptide after an Asp residue at position P1. Also initiates pyroptosis, a programmed lytic cell death pathway, through cleavage of GSDMD. The polypeptide is Caspase-1-B (casp1-b) (Xenopus laevis (African clawed frog)).